The following is a 448-amino-acid chain: Tubulin beta chain (448 aa).

Positions 11, 69, 138, 142, 143, 144, 204, and 226 each coordinate GTP. Glutamate 69 serves as a coordination point for Mg(2+). A disordered region spans residues 425-448; sequence YQDAGVDEEEEEYDEEAPVEEPLE. Over residues 429–448 the composition is skewed to acidic residues; sequence GVDEEEEEYDEEAPVEEPLE.

Belongs to the tubulin family. Dimer of alpha and beta chains. A typical microtubule is a hollow water-filled tube with an outer diameter of 25 nm and an inner diameter of 15 nM. Alpha-beta heterodimers associate head-to-tail to form protofilaments running lengthwise along the microtubule wall with the beta-tubulin subunit facing the microtubule plus end conferring a structural polarity. Microtubules usually have 13 protofilaments but different protofilament numbers can be found in some organisms and specialized cells. Mg(2+) serves as cofactor.

It localises to the cytoplasm. Its subcellular location is the cytoskeleton. Tubulin is the major constituent of microtubules, a cylinder consisting of laterally associated linear protofilaments composed of alpha- and beta-tubulin heterodimers. Microtubules grow by the addition of GTP-tubulin dimers to the microtubule end, where a stabilizing cap forms. Below the cap, tubulin dimers are in GDP-bound state, owing to GTPase activity of alpha-tubulin. This is Tubulin beta chain from Metarhizium anisopliae (Entomophthora anisopliae).